The sequence spans 590 residues: Major surface protein MspTL (590 aa).

The signal sequence occupies residues 1–19 (MKKILAFFLVFALAGAVFA).

It localises to the cell outer membrane. In terms of biological role, major component of the outer membrane. This is Major surface protein MspTL (mspTL) from Treponema lecithinolyticum.